A 700-amino-acid chain; its full sequence is UvrABC system protein C (700 aa).

Residues 11–90 (TTPGVYLYKD…IKKHRPRYNI (80 aa)) enclose the GIY-YIG domain. Residues 200 to 235 (TELIDMLRADMQAASDALEFEEAALLRDQLQAVERT) enclose the UVR domain.

The protein belongs to the UvrC family. As to quaternary structure, interacts with UvrB in an incision complex.

It is found in the cytoplasm. In terms of biological role, the UvrABC repair system catalyzes the recognition and processing of DNA lesions. UvrC both incises the 5' and 3' sides of the lesion. The N-terminal half is responsible for the 3' incision and the C-terminal half is responsible for the 5' incision. This chain is UvrABC system protein C, found in Oleidesulfovibrio alaskensis (strain ATCC BAA-1058 / DSM 17464 / G20) (Desulfovibrio alaskensis).